We begin with the raw amino-acid sequence, 132 residues long: Ribosome-binding factor A (132 aa).

It belongs to the RbfA family. As to quaternary structure, monomer. Binds 30S ribosomal subunits, but not 50S ribosomal subunits or 70S ribosomes.

It is found in the cytoplasm. In terms of biological role, one of several proteins that assist in the late maturation steps of the functional core of the 30S ribosomal subunit. Associates with free 30S ribosomal subunits (but not with 30S subunits that are part of 70S ribosomes or polysomes). Required for efficient processing of 16S rRNA. May interact with the 5'-terminal helix region of 16S rRNA. This is Ribosome-binding factor A from Pseudomonas entomophila (strain L48).